A 67-amino-acid chain; its full sequence is UPF0434 protein Patl_1782 (67 aa).

Belongs to the UPF0434 family.

This chain is UPF0434 protein Patl_1782, found in Pseudoalteromonas atlantica (strain T6c / ATCC BAA-1087).